A 116-amino-acid polypeptide reads, in one-letter code: Large ribosomal subunit protein bL17 (116 aa).

This sequence belongs to the bacterial ribosomal protein bL17 family. As to quaternary structure, part of the 50S ribosomal subunit. Contacts protein L32.

This Prochlorococcus marinus (strain NATL2A) protein is Large ribosomal subunit protein bL17.